The chain runs to 464 residues: UDP-glycosyltransferase 83A1 (464 aa).

Residues serine 295, 341–343 (APQ), 358–366 (HCGWNSTLE), and 380–383 (FADQ) contribute to the UDP-alpha-D-glucose site.

Belongs to the UDP-glycosyltransferase family.

The sequence is that of UDP-glycosyltransferase 83A1 (UGT83A1) from Arabidopsis thaliana (Mouse-ear cress).